The primary structure comprises 103 residues: Cyclotide vitri-A (103 aa).

The N-terminal stretch at 1–9 (AAFALPAFA) is a signal peptide. Positions 10–69 (SFEKDVITPAALEAVLNRKAPLSNIMMENDAIVNVIANVKTVISNPVLEEALLKTNHGVN) are excised as a propeptide. Positions 70-99 (GIPCGESCVWIPCITSAIGCSCKSKVCYRN) form a cross-link, cyclopeptide (Gly-Asn). Disulfide bonds link cysteine 73–cysteine 89, cysteine 77–cysteine 91, and cysteine 82–cysteine 96. Positions 100 to 103 (SLDN) are excised as a propeptide.

Post-translationally, this is a cyclic peptide.

In terms of biological role, probably participates in a plant defense mechanism. This Viola biflora (Yellow wood violet) protein is Cyclotide vitri-A.